The chain runs to 43 residues: Potassium channel toxin gamma-KTx 3.2 (43 aa).

4 disulfides stabilise this stretch: Cys5–Cys23, Cys11–Cys34, Cys20–Cys39, and Cys24–Cys41.

Belongs to the ergtoxin family. Gamma-KTx 3 subfamily. Expressed by the venom gland.

Its subcellular location is the secreted. Its function is as follows. Blocks Kv11/ERG potassium channels. The chain is Potassium channel toxin gamma-KTx 3.2 from Centruroides elegans (Bark scorpion).